The sequence spans 166 residues: NAD(P)H-quinone oxidoreductase subunit I, chloroplastic (166 aa).

4Fe-4S ferredoxin-type domains lie at 55-84 (GRIH…VDWK) and 95-124 (LNYS…MTEE). 8 residues coordinate [4Fe-4S] cluster: cysteine 64, cysteine 67, cysteine 70, cysteine 74, cysteine 104, cysteine 107, cysteine 110, and cysteine 114.

It belongs to the complex I 23 kDa subunit family. As to quaternary structure, NDH is composed of at least 16 different subunits, 5 of which are encoded in the nucleus. It depends on [4Fe-4S] cluster as a cofactor.

It localises to the plastid. Its subcellular location is the chloroplast thylakoid membrane. It carries out the reaction a plastoquinone + NADH + (n+1) H(+)(in) = a plastoquinol + NAD(+) + n H(+)(out). The catalysed reaction is a plastoquinone + NADPH + (n+1) H(+)(in) = a plastoquinol + NADP(+) + n H(+)(out). Its function is as follows. NDH shuttles electrons from NAD(P)H:plastoquinone, via FMN and iron-sulfur (Fe-S) centers, to quinones in the photosynthetic chain and possibly in a chloroplast respiratory chain. The immediate electron acceptor for the enzyme in this species is believed to be plastoquinone. Couples the redox reaction to proton translocation, and thus conserves the redox energy in a proton gradient. The chain is NAD(P)H-quinone oxidoreductase subunit I, chloroplastic from Calea megacephala.